We begin with the raw amino-acid sequence, 173 residues long: MTLLSGKTTLVLCLSSILCGCTTNGLPTPYSINLSFPVITQNQINSGGYYINDAEQIRTTDGLCLDAGPDQQNRLTLRECKHVQSQLFSFHRDRITQGEKCLDAAGQGTKEGTPIILYSCTGNDNQRWLTDDNKIKGKQSRKCLGTNSIIVRKGDPVVLADCDFSRALEFTIR.

An N-terminal signal peptide occupies residues 1-20 (MTLLSGKTTLVLCLSSILCG). Cys21 carries N-palmitoyl cysteine lipidation. Cys21 carries S-diacylglycerol cysteine lipidation.

Its subcellular location is the cell membrane. This is Probable lipoprotein EnvE (envE) from Salmonella typhimurium (strain LT2 / SGSC1412 / ATCC 700720).